Here is a 143-residue protein sequence, read N- to C-terminus: MLMGQYEHTIDAKGRVIIPAKFREELGEKFVLTKGLDNCLFVYSLEEWKNIEAKLKTLPLTKKDARAFTRFFLAGAVECEIDKQGRILIPANLREHAKIEKDVIFIGVSTRVEIWSKEVWEEYSNNTDVSFEEIAEHLDDLNI.

SpoVT-AbrB domains lie at 5–47 and 76–119; these read QYEH…SLEE and AVEC…SKEV.

The protein belongs to the MraZ family. In terms of assembly, forms oligomers.

It is found in the cytoplasm. The protein resides in the nucleoid. The chain is Transcriptional regulator MraZ from Thermoanaerobacter sp. (strain X514).